The primary structure comprises 494 residues: Cytochrome P450 2A8 (494 aa).

C439 provides a ligand contact to heme.

It belongs to the cytochrome P450 family. It depends on heme as a cofactor. As to expression, liver.

It localises to the endoplasmic reticulum membrane. The protein localises to the microsome membrane. It carries out the reaction an organic molecule + reduced [NADPH--hemoprotein reductase] + O2 = an alcohol + oxidized [NADPH--hemoprotein reductase] + H2O + H(+). In terms of biological role, highly active in 7-ethoxycoumarin O-deethylation, and benzphetamine N-demethylation; moderately active in testosterone 7-alpha-hydroxylation, ethylmorphine N-demethylation, p-nitroanisole O-demethylation; and only slightly active in benzopyrene 3-hydroxylation, 7-ethoxyresorufin O-deethylation, testosterone 2-alpha-hydroxylation and testosterone 17-oxidation. Competent in the metabolic activation of aflatoxin B1. The polypeptide is Cytochrome P450 2A8 (CYP2A8) (Mesocricetus auratus (Golden hamster)).